Here is a 525-residue protein sequence, read N- to C-terminus: Vesicular inhibitory amino acid transporter (525 aa).

Over 1–132 the chain is Cytoplasmic; sequence MATLLRSKLT…WNVTNAIQGM (132 aa). Residues 133–153 form a helical membrane-spanning segment; sequence FVLGLPYAILHGGYLGLFLII. At 154-204 the chain is on the lumenal, vesicle side; the sequence is FAAVVCCYTGKILIACLYEENEDGEVVRVRDSYVAIANACCAPRFPTLGGR. Y186 is subject to 3'-nitrotyrosine. Residues 205 to 225 form a helical membrane-spanning segment; sequence VVNVAQIIELVMTCILYVVVS. At 226–265 the chain is on the cytoplasmic side; the sequence is GNLMYNSFPGLPVSQKSWSIIATAVLLPCAFLKNLKAVSK. Residues 266–286 form a helical membrane-spanning segment; it reads FSLLCTLAHFVINILVIAYCL. Over 287–305 the chain is Lumenal, vesicle; sequence SRARDWAWEKVKFYIDVKK. A helical transmembrane segment spans residues 306-326; the sequence is FPISIGIIVFSYTSQIFLPSL. Residues 327 to 341 lie on the Cytoplasmic side of the membrane; the sequence is EGNMQQPSEFHCMMN. A helical membrane pass occupies residues 342–362; the sequence is WTHIAACVLKGLFALVAYLTW. Over 363-383 the chain is Lumenal, vesicle; sequence ADETKEVITDNLPGSIRAVVN. The helical transmembrane segment at 384–404 threads the bilayer; it reads LFLVAKALLSYPLPFFAAVEV. The Cytoplasmic portion of the chain corresponds to 405–438; that stretch reads LEKSLFQEGSRAFFPACYGGDGRLKSWGLTLRCA. A helical transmembrane segment spans residues 439 to 459; it reads LVVFTLLMAIYVPHFALLMGL. The Lumenal, vesicle portion of the chain corresponds to 460–461; that stretch reads TG. Residues 462–482 form a helical membrane-spanning segment; that stretch reads SLTGAGLCFLLPSLFHLRLLW. The Cytoplasmic segment spans residues 483 to 489; sequence RKLLWHQ. A helical membrane pass occupies residues 490–510; that stretch reads VFFDVAIFVIGGICSVSGFVH. Residues 511–525 are Lumenal, vesicle-facing; that stretch reads SLEGLIEAYRTNAED.

It belongs to the amino acid/polyamine transporter 2 family. In terms of tissue distribution, brain and retina. Localized in horizontal cell tips at both rod and cone terminals.

Its subcellular location is the cytoplasmic vesicle membrane. The protein localises to the presynapse. The enzyme catalyses 4-aminobutanoate(out) + n H(+)(in) = 4-aminobutanoate(in) + n H(+)(out). The catalysed reaction is glycine(out) + n H(+)(in) = glycine(in) + n H(+)(out). It carries out the reaction beta-alanine(out) + n H(+)(in) = beta-alanine(in) + n H(+)(out). Chloride ions activate 4-aminobutanoate/H(+) transport. In terms of biological role, antiporter that exchanges vesicular protons for cytosolic 4-aminobutanoate or to a lesser extend glycine, thus allowing their secretion from nerve terminals. The transport is equally dependent on the chemical and electrical components of the proton gradient. May also transport beta-alanine. Acidification of GABAergic synaptic vesicles is a prerequisite for 4-aminobutanoate uptake. The polypeptide is Vesicular inhibitory amino acid transporter (Mus musculus (Mouse)).